Reading from the N-terminus, the 176-residue chain is NAD(P)H-quinone oxidoreductase subunit J (176 aa).

2 stretches are compositionally biased toward polar residues: residues 1-12 and 20-30; these read MEKDSQATSSDT and ISQSLSKDGIP. A disordered region spans residues 1–30; it reads MEKDSQATSSDTSIEKEGVISQSLSKDGIP.

This sequence belongs to the complex I 30 kDa subunit family. In terms of assembly, NDH-1 can be composed of about 15 different subunits; different subcomplexes with different compositions have been identified which probably have different functions.

It localises to the cellular thylakoid membrane. The enzyme catalyses a plastoquinone + NADH + (n+1) H(+)(in) = a plastoquinol + NAD(+) + n H(+)(out). It catalyses the reaction a plastoquinone + NADPH + (n+1) H(+)(in) = a plastoquinol + NADP(+) + n H(+)(out). In terms of biological role, NDH-1 shuttles electrons from an unknown electron donor, via FMN and iron-sulfur (Fe-S) centers, to quinones in the respiratory and/or the photosynthetic chain. The immediate electron acceptor for the enzyme in this species is believed to be plastoquinone. Couples the redox reaction to proton translocation, and thus conserves the redox energy in a proton gradient. Cyanobacterial NDH-1 also plays a role in inorganic carbon-concentration. The polypeptide is NAD(P)H-quinone oxidoreductase subunit J (Prochlorococcus marinus (strain AS9601)).